We begin with the raw amino-acid sequence, 596 residues long: Aspartate--tRNA(Asp/Asn) ligase (596 aa).

Glu169 lines the L-aspartate pocket. The interval 193 to 196 (QLFK) is aspartate. Arg215 contacts L-aspartate. ATP contacts are provided by residues 215–217 (RDE) and Gln224. L-aspartate is bound at residue His447. An ATP-binding site is contributed by Glu481. Arg488 is a binding site for L-aspartate. 533–536 (GWDR) contacts ATP. The disordered stretch occupies residues 559 to 596 (GYDPLTQAPAPITAQQRKEAGVDFKPEAKKADPGATKA). Basic and acidic residues predominate over residues 574-590 (QRKEAGVDFKPEAKKAD).

This sequence belongs to the class-II aminoacyl-tRNA synthetase family. Type 1 subfamily. As to quaternary structure, homodimer.

The protein resides in the cytoplasm. The catalysed reaction is tRNA(Asx) + L-aspartate + ATP = L-aspartyl-tRNA(Asx) + AMP + diphosphate. In terms of biological role, aspartyl-tRNA synthetase with relaxed tRNA specificity since it is able to aspartylate not only its cognate tRNA(Asp) but also tRNA(Asn). Reaction proceeds in two steps: L-aspartate is first activated by ATP to form Asp-AMP and then transferred to the acceptor end of tRNA(Asp/Asn). This chain is Aspartate--tRNA(Asp/Asn) ligase, found in Arthrobacter sp. (strain FB24).